The following is a 258-amino-acid chain: Heat-labile enterotoxin A chain (258 aa).

A signal peptide spans 1–18; it reads MKNITFIFFILLASPLYA. 25-39 provides a ligand contact to NAD(+); sequence RADSRPPDEIKRSGG. The active site involves Glu128. Cys205 and Cys217 form a disulfide bridge.

The protein belongs to the enterotoxin A family. Heterohexamer of one A chain and of five B chains.

In terms of biological role, the biological activity of the toxin is produced by the A chain, which activates intracellular adenyl cyclase. The chain is Heat-labile enterotoxin A chain (eltA) from Escherichia coli O78:H11 (strain H10407 / ETEC).